The primary structure comprises 1104 residues: Transposon Ty4-P Gag-Pol polyprotein (1104 aa).

Residues 48–112 (VKQYQRNLNR…VEKIQLLETN (65 aa)) adopt a coiled-coil conformation. A ty4 protease region spans residues 381–501 (QQQLKSSAKE…KTKMVLSRKY (121 aa)). The For protease activity; shared with dimeric partner role is filled by D414. The interval 539–599 (AIKPTSSPGF…EPNEFWCQTC (61 aa)) is integrase-type zinc finger-like. Residues 619 to 786 (TDHEPGSSWC…LPLKAISRQP (168 aa)) form the Integrase catalytic domain. Residues D630 and D695 each coordinate Mg(2+).

In terms of assembly, the protease is a homodimer, whose active site consists of two apposed aspartic acid residues. In terms of processing, proteolytically processed into capsid protein (CA), Ty4 protease (PR), integrase (IN) and reverse transcriptase/ribonuclease H (RT) proteins. Initially, virus-like particles (VLPs) are composed of the structural unprocessed proteins Gag and Gag-Pol, and also contain the host initiator methionine tRNA (tRNA(i)-Met) which serves as a primer for minus-strand DNA synthesis, and a dimer of genomic Ty RNA. Processing of the polyproteins occurs within the particle and proceeds by an ordered pathway, called maturation. First, the protease (PR) is released by autocatalytic cleavage of the Gag-Pol polyprotein, and this cleavage is a prerequisite for subsequent processing at the remaining sites to release the mature structural and catalytic proteins. Maturation takes place prior to the RT reaction and is required to produce transposition-competent VLPs.

The protein localises to the cytoplasm. It localises to the nucleus. The catalysed reaction is DNA(n) + a 2'-deoxyribonucleoside 5'-triphosphate = DNA(n+1) + diphosphate. The enzyme catalyses Endonucleolytic cleavage to 5'-phosphomonoester.. Functionally, capsid protein (CA) is the structural component of the virus-like particle (VLP), forming the shell that encapsulates the retrotransposons dimeric RNA genome. The aspartyl protease (PR) mediates the proteolytic cleavages of the Gag and Gag-Pol polyproteins after assembly of the VLP. Its function is as follows. Reverse transcriptase/ribonuclease H (RT) is a multifunctional enzyme that catalyzes the conversion of the retro-elements RNA genome into dsDNA within the VLP. The enzyme displays a DNA polymerase activity that can copy either DNA or RNA templates, and a ribonuclease H (RNase H) activity that cleaves the RNA strand of RNA-DNA heteroduplexes during plus-strand synthesis and hydrolyzes RNA primers. The conversion leads to a linear dsDNA copy of the retrotransposon that includes long terminal repeats (LTRs) at both ends. In terms of biological role, integrase (IN) targets the VLP to the nucleus, where a subparticle preintegration complex (PIC) containing at least integrase and the newly synthesized dsDNA copy of the retrotransposon must transit the nuclear membrane. Once in the nucleus, integrase performs the integration of the dsDNA into the host genome. The polypeptide is Transposon Ty4-P Gag-Pol polyprotein (TY4B-P) (Saccharomyces cerevisiae (strain ATCC 204508 / S288c) (Baker's yeast)).